The chain runs to 599 residues: NADH-ubiquinone oxidoreductase chain 5 (599 aa).

17 helical membrane-spanning segments follow: residues 1–21 (MALM…PLVF), 41–61 (FITS…IIIL), 79–99 (LDLY…SIME), 114–134 (FLNY…ANNM), 137–157 (LFIG…WWYG), 166–186 (LQAI…MAWF), 198–218 (IFSL…AAMG), 237–257 (TPVS…FLLI), 269–289 (IMTT…ICAL), 297–317 (IIAF…GINQ), 323–343 (LHIC…GSII), 362–382 (MPLT…TPFM), 400–420 (INSW…AYST), 453–473 (LMLG…PVNM), 478–498 (MPFT…IVAM), 509–529 (MYPN…PTII), and 578–598 (GMLK…MLIM).

It belongs to the complex I subunit 5 family.

Its subcellular location is the mitochondrion inner membrane. The catalysed reaction is a ubiquinone + NADH + 5 H(+)(in) = a ubiquinol + NAD(+) + 4 H(+)(out). In terms of biological role, core subunit of the mitochondrial membrane respiratory chain NADH dehydrogenase (Complex I) that is believed to belong to the minimal assembly required for catalysis. Complex I functions in the transfer of electrons from NADH to the respiratory chain. The immediate electron acceptor for the enzyme is believed to be ubiquinone. The polypeptide is NADH-ubiquinone oxidoreductase chain 5 (ND5) (Geomys personatus (Texas pocket gopher)).